A 248-amino-acid chain; its full sequence is PF03932 family protein CutC (248 aa).

It belongs to the CutC family. In terms of assembly, homodimer.

The protein localises to the cytoplasm. In Escherichia coli O9:H4 (strain HS), this protein is PF03932 family protein CutC.